The chain runs to 495 residues: ATP synthase subunit beta, chloroplastic (495 aa).

Residue 172-179 (GGAGVGKT) coordinates ATP.

This sequence belongs to the ATPase alpha/beta chains family. In terms of assembly, F-type ATPases have 2 components, CF(1) - the catalytic core - and CF(0) - the membrane proton channel. CF(1) has five subunits: alpha(3), beta(3), gamma(1), delta(1), epsilon(1). CF(0) has four main subunits: a(1), b(1), b'(1) and c(9-12).

It is found in the plastid. Its subcellular location is the chloroplast thylakoid membrane. The catalysed reaction is ATP + H2O + 4 H(+)(in) = ADP + phosphate + 5 H(+)(out). Its function is as follows. Produces ATP from ADP in the presence of a proton gradient across the membrane. The catalytic sites are hosted primarily by the beta subunits. The chain is ATP synthase subunit beta, chloroplastic from Hyacinthus orientalis (Common hyacinth).